We begin with the raw amino-acid sequence, 505 residues long: Apolipoprotein N-acyltransferase (505 aa).

Transmembrane regions (helical) follow at residues 6-26 (PSIL…CLAF), 29-49 (FDIW…ATLV), 53-73 (TAML…VQWV), 80-100 (FGGV…SYLG), 119-139 (FVLA…FTGF), 152-172 (PFAQ…VILL), and 189-209 (TFTK…LQFV). The region spanning 223-469 (IQANIEQQLK…TNTLTAEIAT (247 aa)) is the CN hydrolase domain. Glu263 functions as the Proton acceptor in the catalytic mechanism. Lys328 is an active-site residue. Cys379 (nucleophile) is an active-site residue. The chain crosses the membrane as a helical span at residues 475-495 (LFGQFGHWLIYSLSFICVAFG).

It belongs to the CN hydrolase family. Apolipoprotein N-acyltransferase subfamily.

The protein localises to the cell inner membrane. The catalysed reaction is N-terminal S-1,2-diacyl-sn-glyceryl-L-cysteinyl-[lipoprotein] + a glycerophospholipid = N-acyl-S-1,2-diacyl-sn-glyceryl-L-cysteinyl-[lipoprotein] + a 2-acyl-sn-glycero-3-phospholipid + H(+). It functions in the pathway protein modification; lipoprotein biosynthesis (N-acyl transfer). Functionally, catalyzes the phospholipid dependent N-acylation of the N-terminal cysteine of apolipoprotein, the last step in lipoprotein maturation. The sequence is that of Apolipoprotein N-acyltransferase from Haemophilus ducreyi (strain 35000HP / ATCC 700724).